A 290-amino-acid chain; its full sequence is Translin-associated protein X (290 aa).

Positions 1 to 32 (MSNKEGSGGFRKRKHDNFPHNQRREGKDVNSS) are disordered. The segment covering 16-28 (DNFPHNQRREGKD) has biased composition (basic and acidic residues). The interval 73 to 208 (LLHRITSAPD…MRMCINSVGN (136 aa)) is interaction with C1D. 2 residues coordinate Mg(2+): E129 and E197. K279 is covalently cross-linked (Glycyl lysine isopeptide (Lys-Gly) (interchain with G-Cter in SUMO2)).

Belongs to the translin family. In terms of assembly, ring-shaped heterooctamer of six TSN and two TSNAX subunits. Interacts with GOLGA3, TSNAXIP1, SUN1 and AKAP9. Interacts with the homodimeric form of C1D following gamma-radiation. Interacts with TSN and C1D in a mutually exclusive manner. Sumoylated with SUMO1.

Its subcellular location is the cytoplasm. It is found in the perinuclear region. The protein localises to the golgi apparatus. It localises to the nucleus. Its function is as follows. Acts in combination with TSN as an endonuclease involved in the activation of the RNA-induced silencing complex (RISC). Possible role in spermatogenesis. In Pongo abelii (Sumatran orangutan), this protein is Translin-associated protein X (TSNAX).